Reading from the N-terminus, the 257-residue chain is Deoxyribose-phosphate aldolase (257 aa).

The Proton donor/acceptor role is filled by Asp102. The Schiff-base intermediate with acetaldehyde role is filled by Lys166. Lys198 (proton donor/acceptor) is an active-site residue.

The protein belongs to the DeoC/FbaB aldolase family. DeoC type 2 subfamily.

The protein localises to the cytoplasm. The catalysed reaction is 2-deoxy-D-ribose 5-phosphate = D-glyceraldehyde 3-phosphate + acetaldehyde. It functions in the pathway carbohydrate degradation; 2-deoxy-D-ribose 1-phosphate degradation; D-glyceraldehyde 3-phosphate and acetaldehyde from 2-deoxy-alpha-D-ribose 1-phosphate: step 2/2. Functionally, catalyzes a reversible aldol reaction between acetaldehyde and D-glyceraldehyde 3-phosphate to generate 2-deoxy-D-ribose 5-phosphate. This is Deoxyribose-phosphate aldolase from Shewanella piezotolerans (strain WP3 / JCM 13877).